The chain runs to 132 residues: Interleukin-5 (132 aa).

The first 19 residues, 1-19, serve as a signal peptide directing secretion; that stretch reads MRMLLHLSILTLACVWTFA. Asn-45, Asn-74, and Asn-88 each carry an N-linked (GlcNAc...) asparagine glycan.

The protein belongs to the IL-5 family. In terms of assembly, homodimer; disulfide-linked. Interacts with IL5RA. Interacts with CSF2RB.

The protein localises to the secreted. Homodimeric cytokine expressed predominantly by T-lymphocytes and NK cells that plays an important role in the survival, differentiation, and chemotaxis of eosinophils. Also acts on activated and resting B-cells to induce immunoglobulin production, growth, and differentiation. Mechanistically, exerts its biological effects through a receptor composed of IL5RA subunit and the cytokine receptor common subunit beta/CSF2RB. Binding to the receptor leads to activation of various kinases including LYN, SYK and JAK2 and thereby propagates signals through the RAS-MAPK and JAK-STAT5 pathways respectively. The protein is Interleukin-5 (IL5) of Sigmodon hispidus (Hispid cotton rat).